The sequence spans 118 residues: MSNAYDKAHELKEALAETQEFKSLYDLHRQIDADDIAKKMLENFRKLQLDLQQKQMQGVQISEEEAQQAQQQFELVSQHELISKLMDAEQRLSVIITDLNKIITEPLERIYGEPPQEQ.

The protein belongs to the UPF0342 family.

This chain is UPF0342 protein ABC1519, found in Shouchella clausii (strain KSM-K16) (Alkalihalobacillus clausii).